A 131-amino-acid polypeptide reads, in one-letter code: Small ribosomal subunit protein uS8 (131 aa).

It belongs to the universal ribosomal protein uS8 family. In terms of assembly, part of the 30S ribosomal subunit. Contacts proteins S5 and S12.

Functionally, one of the primary rRNA binding proteins, it binds directly to 16S rRNA central domain where it helps coordinate assembly of the platform of the 30S subunit. This is Small ribosomal subunit protein uS8 from Leptothrix cholodnii (strain ATCC 51168 / LMG 8142 / SP-6) (Leptothrix discophora (strain SP-6)).